Here is an 86-residue protein sequence, read N- to C-terminus: Small ribosomal subunit protein bS20 (86 aa).

It belongs to the bacterial ribosomal protein bS20 family.

In terms of biological role, binds directly to 16S ribosomal RNA. The sequence is that of Small ribosomal subunit protein bS20 from Paenarthrobacter aurescens (strain TC1).